A 345-amino-acid polypeptide reads, in one-letter code: Methionine import ATP-binding protein MetN (345 aa).

The 240-residue stretch at 2–241 folds into the ABC transporter domain; that stretch reads IKLKNISKVF…PKTLLAQEFI (240 aa). Residue 38 to 45 participates in ATP binding; it reads GASGAGKS.

The protein belongs to the ABC transporter superfamily. Methionine importer (TC 3.A.1.24) family. In terms of assembly, the complex is composed of two ATP-binding proteins (MetN), two transmembrane proteins (MetI) and a solute-binding protein (MetQ).

Its subcellular location is the cell inner membrane. It catalyses the reaction L-methionine(out) + ATP + H2O = L-methionine(in) + ADP + phosphate + H(+). The catalysed reaction is D-methionine(out) + ATP + H2O = D-methionine(in) + ADP + phosphate + H(+). Its function is as follows. Part of the ABC transporter complex MetNIQ involved in methionine import. Responsible for energy coupling to the transport system. The polypeptide is Methionine import ATP-binding protein MetN (Histophilus somni (strain 129Pt) (Haemophilus somnus)).